Here is a 223-residue protein sequence, read N- to C-terminus: Phosphoenolpyruvate guanylyltransferase (223 aa).

Thr140, Gly156, and Ser159 together coordinate phosphoenolpyruvate.

Belongs to the CofC family.

It catalyses the reaction phosphoenolpyruvate + GTP + H(+) = enolpyruvoyl-2-diphospho-5'-guanosine + diphosphate. The protein operates within cofactor biosynthesis; coenzyme F420 biosynthesis. Functionally, guanylyltransferase that catalyzes the activation of phosphoenolpyruvate (PEP) as enolpyruvoyl-2-diphospho-5'-guanosine, via the condensation of PEP with GTP. It is involved in the biosynthesis of coenzyme F420, a hydride carrier cofactor. In Conexibacter woesei (strain DSM 14684 / CCUG 47730 / CIP 108061 / JCM 11494 / NBRC 100937 / ID131577), this protein is Phosphoenolpyruvate guanylyltransferase.